A 226-amino-acid chain; its full sequence is 2-C-methyl-D-erythritol 4-phosphate cytidylyltransferase (226 aa).

This sequence belongs to the IspD/TarI cytidylyltransferase family. IspD subfamily.

It carries out the reaction 2-C-methyl-D-erythritol 4-phosphate + CTP + H(+) = 4-CDP-2-C-methyl-D-erythritol + diphosphate. It functions in the pathway isoprenoid biosynthesis; isopentenyl diphosphate biosynthesis via DXP pathway; isopentenyl diphosphate from 1-deoxy-D-xylulose 5-phosphate: step 2/6. Catalyzes the formation of 4-diphosphocytidyl-2-C-methyl-D-erythritol from CTP and 2-C-methyl-D-erythritol 4-phosphate (MEP). The sequence is that of 2-C-methyl-D-erythritol 4-phosphate cytidylyltransferase from Bacillus cytotoxicus (strain DSM 22905 / CIP 110041 / 391-98 / NVH 391-98).